Consider the following 956-residue polypeptide: Calsyntenin-3 (956 aa).

A signal peptide spans Met1–Gly20. The Extracellular portion of the chain corresponds to Asn21–Ala850. 2 Cadherin domains span residues Ile30 to Phe151 and Val152 to Phe271. 4 N-linked (GlcNAc...) asparagine glycosylation sites follow: Asn333, Asn353, Asn513, and Asn743. The helical transmembrane segment at Ala851–Phe871 threads the bilayer. Over Arg872–Tyr956 the chain is Cytoplasmic. The segment covering Gly921–Ser937 has biased composition (acidic residues). The segment at Gly921–Tyr956 is disordered. Basic and acidic residues predominate over residues Asp938–Tyr956.

This sequence belongs to the calsyntenin family. In terms of assembly, homooligomer and heterooligomer; mediates both homophilic and heterophilc interactions with clstn1 and clstn2 paralogs via cadherin domains. Interacts (via cadherin domains) with both alpha and beta isoforms of neurexins. By 48 hours post-fertilization (hpf), widely expressed in the brain, with strong expression in the telencephalon and the midbrain. Not expressed in the optic tectum.

The protein resides in the postsynaptic cell membrane. It is found in the endoplasmic reticulum membrane. The protein localises to the golgi apparatus membrane. In terms of biological role, synaptic adhesion molecule. Promotes synapse development by acting as a cell adhesion molecule at the postsynaptic membrane, which associates with presynaptic neurexins. In Danio rerio (Zebrafish), this protein is Calsyntenin-3.